Here is a 495-residue protein sequence, read N- to C-terminus: Glutamate--tRNA ligase (495 aa).

The short motif at P13–L23 is the 'HIGH' region element. A 'KMSKS' region motif is present at residues K257–R261. Residue K260 participates in ATP binding.

This sequence belongs to the class-I aminoacyl-tRNA synthetase family. Glutamate--tRNA ligase type 1 subfamily. In terms of assembly, monomer.

Its subcellular location is the cytoplasm. The catalysed reaction is tRNA(Glu) + L-glutamate + ATP = L-glutamyl-tRNA(Glu) + AMP + diphosphate. Catalyzes the attachment of glutamate to tRNA(Glu) in a two-step reaction: glutamate is first activated by ATP to form Glu-AMP and then transferred to the acceptor end of tRNA(Glu). The protein is Glutamate--tRNA ligase of Mycolicibacterium vanbaalenii (strain DSM 7251 / JCM 13017 / BCRC 16820 / KCTC 9966 / NRRL B-24157 / PYR-1) (Mycobacterium vanbaalenii).